Here is a 1208-residue protein sequence, read N- to C-terminus: DNA-directed RNA polymerase subunit beta (1208 aa).

It belongs to the RNA polymerase beta chain family. As to quaternary structure, the RNAP catalytic core consists of 2 alpha, 1 beta, 1 beta' and 1 omega subunit. When a sigma factor is associated with the core the holoenzyme is formed, which can initiate transcription.

It carries out the reaction RNA(n) + a ribonucleoside 5'-triphosphate = RNA(n+1) + diphosphate. Functionally, DNA-dependent RNA polymerase catalyzes the transcription of DNA into RNA using the four ribonucleoside triphosphates as substrates. The chain is DNA-directed RNA polymerase subunit beta from Enterococcus faecium (Streptococcus faecium).